A 36-amino-acid polypeptide reads, in one-letter code: Glucagon-1 (36 aa).

Belongs to the glucagon family.

The protein resides in the secreted. Its function is as follows. Promotes hydrolysis of glycogen and lipids, and raises the blood sugar level. This chain is Glucagon-1 (gcg1), found in Oreochromis niloticus (Nile tilapia).